The following is a 503-amino-acid chain: ATP synthase subunit alpha (503 aa).

Position 170 to 177 (170 to 177 (GDKQTGKT)) interacts with ATP.

This sequence belongs to the ATPase alpha/beta chains family. As to quaternary structure, F-type ATPases have 2 components, CF(1) - the catalytic core - and CF(0) - the membrane proton channel. CF(1) has five subunits: alpha(3), beta(3), gamma(1), delta(1), epsilon(1). CF(0) has three main subunits: a(1), b(2) and c(9-12). The alpha and beta chains form an alternating ring which encloses part of the gamma chain. CF(1) is attached to CF(0) by a central stalk formed by the gamma and epsilon chains, while a peripheral stalk is formed by the delta and b chains.

The protein resides in the cell inner membrane. The enzyme catalyses ATP + H2O + 4 H(+)(in) = ADP + phosphate + 5 H(+)(out). Its function is as follows. Produces ATP from ADP in the presence of a proton gradient across the membrane. The alpha chain is a regulatory subunit. The polypeptide is ATP synthase subunit alpha (Helicobacter pylori (strain Shi470)).